Reading from the N-terminus, the 259-residue chain is Probable metal transport system ATP-binding protein CT_068 (259 aa).

Residues 9–241 (WSVEDLCVNY…AIFQAYGCEL (233 aa)) enclose the ABC transporter domain. 41-48 (GPNGAGKS) serves as a coordination point for ATP.

This sequence belongs to the ABC transporter superfamily.

Its subcellular location is the cell inner membrane. Functionally, part of an ATP-driven transport system CT_067/CT_068/CT_069/CT_070 for a metal. Probably responsible for energy coupling to the transport system. The polypeptide is Probable metal transport system ATP-binding protein CT_068 (Chlamydia trachomatis serovar D (strain ATCC VR-885 / DSM 19411 / UW-3/Cx)).